Here is a 247-residue protein sequence, read N- to C-terminus: Adenosylcobinamide-GDP ribazoletransferase (247 aa).

5 helical membrane-spanning segments follow: residues 34–54 (IITFPLIGLLLGAISGLVFMV), 57–77 (AWCGAPLAALFSVLVLALMTG), 113–133 (GGLALIFVVLAKILVLSELAL), 138–158 (ILASLAAACAVSRGTAALLMY), and 194–214 (VLLLGMHGVAAMVVTMVAIFI).

It belongs to the CobS family. The cofactor is Mg(2+).

It is found in the cell inner membrane. It carries out the reaction alpha-ribazole + adenosylcob(III)inamide-GDP = adenosylcob(III)alamin + GMP + H(+). The catalysed reaction is alpha-ribazole 5'-phosphate + adenosylcob(III)inamide-GDP = adenosylcob(III)alamin 5'-phosphate + GMP + H(+). The protein operates within cofactor biosynthesis; adenosylcobalamin biosynthesis; adenosylcobalamin from cob(II)yrinate a,c-diamide: step 7/7. In terms of biological role, joins adenosylcobinamide-GDP and alpha-ribazole to generate adenosylcobalamin (Ado-cobalamin). Also synthesizes adenosylcobalamin 5'-phosphate from adenosylcobinamide-GDP and alpha-ribazole 5'-phosphate. The sequence is that of Adenosylcobinamide-GDP ribazoletransferase from Shigella flexneri serotype 5b (strain 8401).